The primary structure comprises 567 residues: Proline--tRNA ligase (567 aa).

The protein belongs to the class-II aminoacyl-tRNA synthetase family. ProS type 1 subfamily. Homodimer.

The protein localises to the cytoplasm. The enzyme catalyses tRNA(Pro) + L-proline + ATP = L-prolyl-tRNA(Pro) + AMP + diphosphate. Functionally, catalyzes the attachment of proline to tRNA(Pro) in a two-step reaction: proline is first activated by ATP to form Pro-AMP and then transferred to the acceptor end of tRNA(Pro). As ProRS can inadvertently accommodate and process non-cognate amino acids such as alanine and cysteine, to avoid such errors it has two additional distinct editing activities against alanine. One activity is designated as 'pretransfer' editing and involves the tRNA(Pro)-independent hydrolysis of activated Ala-AMP. The other activity is designated 'posttransfer' editing and involves deacylation of mischarged Ala-tRNA(Pro). The misacylated Cys-tRNA(Pro) is not edited by ProRS. The chain is Proline--tRNA ligase from Stenotrophomonas maltophilia (strain K279a).